Here is a 38-residue protein sequence, read N- to C-terminus: Anthranilate phosphoribosyltransferase (38 aa).

It belongs to the anthranilate phosphoribosyltransferase family. In terms of assembly, homodimer.

The enzyme catalyses N-(5-phospho-beta-D-ribosyl)anthranilate + diphosphate = 5-phospho-alpha-D-ribose 1-diphosphate + anthranilate. The protein operates within amino-acid biosynthesis; L-tryptophan biosynthesis; L-tryptophan from chorismate: step 2/5. Its function is as follows. Catalyzes the transfer of the phosphoribosyl group of 5-phosphorylribose-1-pyrophosphate (PRPP) to anthranilate to yield N-(5'-phosphoribosyl)-anthranilate (PRA). This Serratia marcescens protein is Anthranilate phosphoribosyltransferase (trpD).